A 188-amino-acid chain; its full sequence is Ribosome maturation factor RimP (188 aa).

The protein belongs to the RimP family.

The protein resides in the cytoplasm. In terms of biological role, required for maturation of 30S ribosomal subunits. This chain is Ribosome maturation factor RimP, found in Erythrobacter litoralis (strain HTCC2594).